We begin with the raw amino-acid sequence, 209 residues long: Uracil phosphoribosyltransferase (209 aa).

5-phospho-alpha-D-ribose 1-diphosphate contacts are provided by residues arginine 79, arginine 104, and 131 to 139 (DPMLATGGT). Residues isoleucine 194 and 199–201 (GDA) each bind uracil. Residue aspartate 200 participates in 5-phospho-alpha-D-ribose 1-diphosphate binding.

This sequence belongs to the UPRTase family. It depends on Mg(2+) as a cofactor.

The catalysed reaction is UMP + diphosphate = 5-phospho-alpha-D-ribose 1-diphosphate + uracil. Its pathway is pyrimidine metabolism; UMP biosynthesis via salvage pathway; UMP from uracil: step 1/1. Its activity is regulated as follows. Allosterically activated by GTP. Functionally, catalyzes the conversion of uracil and 5-phospho-alpha-D-ribose 1-diphosphate (PRPP) to UMP and diphosphate. The protein is Uracil phosphoribosyltransferase of Pseudoalteromonas atlantica (strain T6c / ATCC BAA-1087).